The sequence spans 213 residues: Ribosomal RNA small subunit methyltransferase G (213 aa).

S-adenosyl-L-methionine-binding positions include Gly-72, Phe-77, 125 to 126, and Arg-141; that span reads IE.

The protein belongs to the methyltransferase superfamily. RNA methyltransferase RsmG family.

The protein resides in the cytoplasm. The catalysed reaction is guanosine(527) in 16S rRNA + S-adenosyl-L-methionine = N(7)-methylguanosine(527) in 16S rRNA + S-adenosyl-L-homocysteine. Specifically methylates the N7 position of guanine in position 527 of 16S rRNA. The polypeptide is Ribosomal RNA small subunit methyltransferase G (Sinorhizobium medicae (strain WSM419) (Ensifer medicae)).